The following is an 83-amino-acid chain: RNA-binding protein Hfq (83 aa).

The 60-residue stretch at Asp-10–Val-69 folds into the Sm domain.

The protein belongs to the Hfq family. Homohexamer.

Its function is as follows. RNA chaperone that binds small regulatory RNA (sRNAs) and mRNAs to facilitate mRNA translational regulation in response to envelope stress, environmental stress and changes in metabolite concentrations. Also binds with high specificity to tRNAs. The polypeptide is RNA-binding protein Hfq (Delftia acidovorans (strain DSM 14801 / SPH-1)).